The following is a 96-amino-acid chain: MSAVTVNDDGLVLRLYIQPKASRDSIVGLHGDEVKVAITAPPVDGQANSHLVKFLGKQFRVAKSQVVIEKGELGRHKQIKIINPQQIPPEVAALIN.

It belongs to the UPF0235 family.

In Escherichia coli O157:H7, this protein is UPF0235 protein YggU.